A 485-amino-acid chain; its full sequence is NADH-quinone oxidoreductase subunit N (485 aa).

The next 14 helical transmembrane spans lie at 8–28 (LIAL…MLGI), 35–55 (FINA…LYFV), 78–98 (GLVI…LVGY), 104–124 (EFYL…SANH), 125–145 (LASL…LVGY), 159–179 (YMLL…LLYA), 203–223 (VLAG…LVPF), 235–255 (PAPV…AVVM), 271–291 (MVLS…AISQ), 297–317 (LLGY…IAVQ), 327–347 (GVYL…VSLM), 374–394 (AVMT…GFIG), 408–427 (WWLT…YYLR), and 449–469 (ALTA…LLGV).

Belongs to the complex I subunit 2 family. As to quaternary structure, NDH-1 is composed of 13 different subunits. Subunits NuoA, H, J, K, L, M, N constitute the membrane sector of the complex.

It is found in the cell inner membrane. The catalysed reaction is a quinone + NADH + 5 H(+)(in) = a quinol + NAD(+) + 4 H(+)(out). Its function is as follows. NDH-1 shuttles electrons from NADH, via FMN and iron-sulfur (Fe-S) centers, to quinones in the respiratory chain. The immediate electron acceptor for the enzyme in this species is believed to be ubiquinone. Couples the redox reaction to proton translocation (for every two electrons transferred, four hydrogen ions are translocated across the cytoplasmic membrane), and thus conserves the redox energy in a proton gradient. The chain is NADH-quinone oxidoreductase subunit N from Serratia proteamaculans (strain 568).